The primary structure comprises 256 residues: uncharacterized protein (256 aa).

Helical transmembrane passes span 5-25 (FIEGFETIWTVVRAVVLNYLL), 30-50 (ILSTILYVSAVISWNVSLKVF), 64-84 (VVIFILRIVSLFLWILADPAI), and 105-125 (VGITLYPLYVLLSWAVFLGII). The segment at 198–256 (EKTKSLDSISHSSSSSRKSSTELKIPPVETRIVAEIPVPSSVKRRRHRPNKSMGSIKNS) is disordered. Over residues 203 to 215 (LDSISHSSSSSRK) the composition is skewed to low complexity. Phosphoserine is present on residues Ser210 and Ser211.

It is found in the endoplasmic reticulum membrane. The protein localises to the nucleus membrane. This is an uncharacterized protein from Schizosaccharomyces pombe (strain 972 / ATCC 24843) (Fission yeast).